The following is a 742-amino-acid chain: Probable serine/threonine-protein kinase PkwA (742 aa).

Positions 16–266 (YRLVSRLGAG…TAELLAQLST (251 aa)) constitute a Protein kinase domain. ATP is bound by residues 22–30 (LGAGGMGQV) and Lys-44. The Proton acceptor role is filled by Asp-138. A disordered region spans residues 266–394 (TDHTGDDWPP…PWSPPRVQPP (129 aa)). Positions 301–318 (EPPPPSHGPPRPSEPLPD) are enriched in pro residues. A compositionally biased stretch (basic and acidic residues) spans 343–356 (LEEKPIQVIHEPER). Residues 377–392 (PRPAAPQPPWSPPRVQ) are compositionally biased toward pro residues. WD repeat units lie at residues 455–496 (ILTT…ELHT), 497–538 (LEGH…ERAV), 539–580 (FEGH…EHAV), 581–621 (LKGH…KERD), 622–663 (VLQA…ALHT), 664–705 (FEGH…EHTT), and 706–742 (LEGH…IATE).

The protein belongs to the protein kinase superfamily. Ser/Thr protein kinase family.

It catalyses the reaction L-seryl-[protein] + ATP = O-phospho-L-seryl-[protein] + ADP + H(+). The catalysed reaction is L-threonyl-[protein] + ATP = O-phospho-L-threonyl-[protein] + ADP + H(+). In terms of biological role, may play a regulatory role during the complex growth cycle and in secondary metabolite production. In Thermomonospora curvata, this protein is Probable serine/threonine-protein kinase PkwA (pkwA).